A 396-amino-acid chain; its full sequence is MPTDFLFTSESVTEGHPDKIADQISDGVLDAIIAKDPQARVAVETLVKTGLAIVAGEVTTNCYVDIPKLVRSTICRIGYTDSSMGYDGNTCGVMVAIEGQSQDIARGVDNKKDQGAGDQGMMFGFACDETPELMPAPIHYAHAITRRLADVRRKQHPWIRPDGKSQVTVEYRDGRPARIDAVVVSTQHSDEVSNKKIQEAIREDVIAKALPKKLIDNKTKFFINPTGRFVVGGPMGDSGLTGRKIIVDTYGGMGRHGGGAFSGKDPSKVDRSAAYMGRHIAKTVVAAGLARRCEVQVSYAIGVAEPVSVMVETFGTATVPEERIALAVRKTFGLRPREITEYLNLLRPIYQKTAAYGHFGRTEKEFTWERVEEKKDALRDAAKSATPSGGRRLKAV.

Histidine 16 is a binding site for ATP. Aspartate 18 is a Mg(2+) binding site. Glutamate 44 provides a ligand contact to K(+). Residues glutamate 57 and glutamine 100 each coordinate L-methionine. Residues 100 to 110 are flexible loop; sequence QSQDIARGVDN. ATP contacts are provided by residues 162-164, 228-229, aspartate 237, 243-244, alanine 260, and lysine 264; these read DGK, RF, and RK. Residue aspartate 237 participates in L-methionine binding. Residue lysine 268 participates in L-methionine binding.

This sequence belongs to the AdoMet synthase family. Homotetramer; dimer of dimers. The cofactor is Mg(2+). Requires K(+) as cofactor.

The protein resides in the cytoplasm. The catalysed reaction is L-methionine + ATP + H2O = S-adenosyl-L-methionine + phosphate + diphosphate. It participates in amino-acid biosynthesis; S-adenosyl-L-methionine biosynthesis; S-adenosyl-L-methionine from L-methionine: step 1/1. Its function is as follows. Catalyzes the formation of S-adenosylmethionine (AdoMet) from methionine and ATP. The overall synthetic reaction is composed of two sequential steps, AdoMet formation and the subsequent tripolyphosphate hydrolysis which occurs prior to release of AdoMet from the enzyme. The polypeptide is S-adenosylmethionine synthase (Myxococcus xanthus (strain DK1622)).